The primary structure comprises 101 residues: Small ribosomal subunit protein uS14 (101 aa).

It belongs to the universal ribosomal protein uS14 family. Part of the 30S ribosomal subunit. Contacts proteins S3 and S10.

Its function is as follows. Binds 16S rRNA, required for the assembly of 30S particles and may also be responsible for determining the conformation of the 16S rRNA at the A site. The protein is Small ribosomal subunit protein uS14 of Buchnera aphidicola subsp. Acyrthosiphon pisum (strain APS) (Acyrthosiphon pisum symbiotic bacterium).